Consider the following 854-residue polypeptide: Transcription factor asR3 (854 aa).

Residues 19-45 (CWECRRRKIKCDRNDPCAHCIRHETQC) constitute a DNA-binding region (zn(2)-C6 fungal-type). The segment at 56-156 (TDSDVSRTRP…SLSTNTSPSA (101 aa)) is disordered. 2 stretches are compositionally biased toward polar residues: residues 78-90 (ASGS…TRPS) and 125-145 (LNPS…SSRG). Low complexity predominate over residues 146-156 (PSLSTNTSPSA).

Its subcellular location is the nucleus. Transcription factor; part of the gene cluster that mediates the biosynthesis of xenovulene A, an unusual meroterpenoid that has potent inhibitory effects on the human gamma-aminobutyrate A (GABAA) benzodiazepine receptor. The polypeptide is Transcription factor asR3 (Sarocladium schorii (Acremonium strictum (strain IMI 501407))).